A 1181-amino-acid polypeptide reads, in one-letter code: Integrin alpha-7 (1181 aa).

The first 33 residues, 1 to 33, serve as a signal peptide directing secretion; sequence MAGARSRDPWGASGICYLFGSLLVELLFSRAVA. Residues 34-1082 lie on the Extracellular side of the membrane; it reads FNLDVMGALR…MAVVAEGVPW (1049 aa). FG-GAP repeat units lie at residues 35 to 103, 110 to 175, 185 to 238, 292 to 349, 350 to 411, 412 to 467, and 471 to 530; these read NLDV…ETDC, QGAD…IRDE, EGRP…SADL, DRLP…ASRL, VPEV…HWAG, ISPL…GVVA, and QVLE…IAPR. Asparagine 86 carries N-linked (GlcNAc...) asparagine glycosylation. 3 disulfide bridges follow: cysteine 94-cysteine 103, cysteine 140-cysteine 163, and cysteine 184-cysteine 197. Ca(2+) contacts are provided by aspartate 372, asparagine 374, aspartate 376, aspartate 380, aspartate 434, asparagine 436, aspartate 438, aspartate 442, aspartate 492, aspartate 494, asparagine 496, tyrosine 498, and aspartate 500. 6 cysteine pairs are disulfide-bonded: cysteine 539-cysteine 546, cysteine 552-cysteine 615, cysteine 681-cysteine 687, cysteine 781-cysteine 792, cysteine 939-cysteine 994, and cysteine 1001-cysteine 1006. Asparagine 786 carries N-linked (GlcNAc...) asparagine glycosylation. Over residues 950–961 the composition is skewed to basic and acidic residues; that stretch reads VDSRDRRRRELE. A disordered region spans residues 950–978; it reads VDSRDRRRRELEPPEQQEPGERQEPSMSW. The N-linked (GlcNAc...) asparagine glycan is linked to asparagine 989. N-linked (GlcNAc...) asparagine glycosylation is found at asparagine 1025 and asparagine 1045. A helical membrane pass occupies residues 1083 to 1103; sequence WVILLAVLAGLLVLALLVLLL. Residues 1104-1181 are Cytoplasmic-facing; it reads WKMGFFKRAK…PDGHPGPGTA (78 aa). The short motif at 1107-1111 is the GFFKR motif element; sequence GFFKR. Residues 1138-1181 are disordered; it reads EKTGTILRNNWGSPRREGPDAHPILAADGHPELGPDGHPGPGTA. Tandem repeats lie at residues 1157 to 1160, 1165 to 1168, and 1173 to 1176. A 3 X 4 AA repeats of D-X-H-P region spans residues 1157-1176; that stretch reads DAHPILAADGHPELGPDGHP.

Belongs to the integrin alpha chain family. As to quaternary structure, heterodimer of an alpha and a beta subunit. The alpha subunit is composed of a heavy and a light chain linked by a disulfide bond. Alpha-7 associates with beta-1. Interacts with COMP. Interacts (via C-terminus intracellular tail region) with CIB1; the interaction is stabilized/increased in a calcium- and magnesium-dependent manner. Post-translationally, ADP-ribosylated on at least two sites of the extracellular domain in skeletal myotubes. A 70 kDa form is created by proteolytic cleavage. Cleavage is elevated during myogenic differentiation and the cleaved form enhances cell adhesion and spreading on laminin. Isoforms containing segment A are predominantly expressed in skeletal muscle. Isoforms containing segment B are abundantly expressed in skeletal muscle, moderately in cardiac muscle, small intestine, colon, ovary and prostate and weakly in lung and testes. Isoforms containing segment X2D are expressed at low levels in fetal and adult skeletal muscle and in cardiac muscle, but are not detected in myoblasts and myotubes. In muscle fibers isoforms containing segment A and B are expressed at myotendinous and neuromuscular junctions; isoforms containing segment C are expressed at neuromuscular junctions and at extrasynaptic sites. Isoforms containing segments X1 or X2 or, at low levels, X1X2 are expressed in fetal and adult skeletal muscle (myoblasts and myotubes) and cardiac muscle.

The protein localises to the membrane. Functionally, integrin alpha-7/beta-1 is the primary laminin receptor on skeletal myoblasts and adult myofibers. During myogenic differentiation, it may induce changes in the shape and mobility of myoblasts, and facilitate their localization at laminin-rich sites of secondary fiber formation. It is involved in the maintenance of the myofibers cytoarchitecture as well as for their anchorage, viability and functional integrity. Isoform Alpha-7X2B and isoform Alpha-7X1B promote myoblast migration on laminin 1 and laminin 2/4, but isoform Alpha-7X1B is less active on laminin 1 (In vitro). Acts as a Schwann cell receptor for laminin-2. Acts as a receptor of COMP and mediates its effect on vascular smooth muscle cells (VSMCs) maturation. Required to promote contractile phenotype acquisition in differentiated airway smooth muscle (ASM) cells. This chain is Integrin alpha-7 (ITGA7), found in Homo sapiens (Human).